A 693-amino-acid chain; its full sequence is Polyribonucleotide nucleotidyltransferase (693 aa).

Residues aspartate 485 and aspartate 491 each contribute to the Mg(2+) site. In terms of domain architecture, KH spans 552 to 611 (PRIMVLEINPSKIGDLIGPSGKNIKKIIEETHTTINIKPEGLVYISAPDQESAEKAAQMV). The S1 motif domain maps to 621-691 (GDIFLGKVIR…SSGRISLTRK (71 aa)).

It belongs to the polyribonucleotide nucleotidyltransferase family. The cofactor is Mg(2+).

The protein localises to the cytoplasm. It carries out the reaction RNA(n+1) + phosphate = RNA(n) + a ribonucleoside 5'-diphosphate. Involved in mRNA degradation. Catalyzes the phosphorolysis of single-stranded polyribonucleotides processively in the 3'- to 5'-direction. The polypeptide is Polyribonucleotide nucleotidyltransferase (Dictyoglomus thermophilum (strain ATCC 35947 / DSM 3960 / H-6-12)).